The chain runs to 438 residues: Na(+)/H(+) antiporter NhaA (438 aa).

11 consecutive transmembrane segments (helical) span residues 23–43, 62–82, 104–124, 133–153, 162–182, 185–205, 212–232, 302–322, 337–357, 372–392, and 410–430; these read FGGI…NSFV, FFIG…LFFL, SFPV…YFFL, GFGI…MLLG, VFLI…IALF, TNLK…LALL, SLIP…QSGI, FLAP…NAGV, LGVI…ITFI, WWHI…SMFI, and IAIL…LFLL.

The protein belongs to the NhaA Na(+)/H(+) (TC 2.A.33) antiporter family.

It is found in the cell inner membrane. The enzyme catalyses Na(+)(in) + 2 H(+)(out) = Na(+)(out) + 2 H(+)(in). In terms of biological role, na(+)/H(+) antiporter that extrudes sodium in exchange for external protons. The chain is Na(+)/H(+) antiporter NhaA from Helicobacter acinonychis (strain Sheeba).